Here is a 78-residue protein sequence, read N- to C-terminus: D-alanyl carrier protein (78 aa).

Residues 1–78 (MAFRENVLEI…MIITQLEALK (78 aa)) enclose the Carrier domain. Ser36 bears the O-(pantetheine 4'-phosphoryl)serine mark.

It belongs to the DltC family. 4'-phosphopantetheine is transferred from CoA to a specific serine of apo-DCP.

It localises to the cytoplasm. It functions in the pathway cell wall biogenesis; lipoteichoic acid biosynthesis. In terms of biological role, carrier protein involved in the D-alanylation of lipoteichoic acid (LTA). The loading of thioester-linked D-alanine onto DltC is catalyzed by D-alanine--D-alanyl carrier protein ligase DltA. The DltC-carried D-alanyl group is further transferred to cell membrane phosphatidylglycerol (PG) by forming an ester bond, probably catalyzed by DltD. D-alanylation of LTA plays an important role in modulating the properties of the cell wall in Gram-positive bacteria, influencing the net charge of the cell wall. This chain is D-alanyl carrier protein, found in Listeria innocua serovar 6a (strain ATCC BAA-680 / CLIP 11262).